Here is a 117-residue protein sequence, read N- to C-terminus: Transcription elongation factor SPT4 (117 aa).

Positions 1–40 are interaction with SUPT5H; sequence MALETVPKDLRHLRACLLCSLVKTIDQFEYDGCDNCDAYL. The C4-type zinc-finger motif lies at 16-36; that stretch reads CLLCSLVKTIDQFEYDGCDNC.

The protein belongs to the SPT4 family. In terms of assembly, interacts with SUPT5H to form the DSIF complex. DSIF interacts with RNA polymerase II and with the positive transcription elongation factor b complex (P-TEFb complex), which is composed of CDK9 and cyclin-T.

The protein resides in the nucleus. May function as a component of the DRB sensitivity-inducing factor complex (DSIF complex), which regulates transcription elongation by RNA polymerase II. Probably enhances transcriptional pausing at sites proximal to the promoter, which may in turn facilitate the assembly of an elongation competent RNA polymerase II complex. The polypeptide is Transcription elongation factor SPT4 (supt4h1) (Xenopus laevis (African clawed frog)).